A 329-amino-acid chain; its full sequence is Small ribosomal subunit protein uS2 (329 aa).

This sequence belongs to the universal ribosomal protein uS2 family.

The protein is Small ribosomal subunit protein uS2 of Bradyrhizobium sp. (strain ORS 278).